The primary structure comprises 451 residues: uncharacterized protein (451 aa).

Residues 50–147 (RFEHSLGTMF…DVDADRMDYL (98 aa)) enclose the HD domain.

This is an uncharacterized protein from Methanocaldococcus jannaschii (strain ATCC 43067 / DSM 2661 / JAL-1 / JCM 10045 / NBRC 100440) (Methanococcus jannaschii).